The sequence spans 328 residues: Phenylalanine--tRNA ligase alpha subunit (328 aa).

A Mg(2+)-binding site is contributed by glutamate 253.

This sequence belongs to the class-II aminoacyl-tRNA synthetase family. Phe-tRNA synthetase alpha subunit type 1 subfamily. In terms of assembly, tetramer of two alpha and two beta subunits. Requires Mg(2+) as cofactor.

The protein localises to the cytoplasm. It carries out the reaction tRNA(Phe) + L-phenylalanine + ATP = L-phenylalanyl-tRNA(Phe) + AMP + diphosphate + H(+). This chain is Phenylalanine--tRNA ligase alpha subunit, found in Actinobacillus pleuropneumoniae serotype 5b (strain L20).